The following is a 445-amino-acid chain: Argininosuccinate synthase (445 aa).

ATP is bound by residues 17–25 and A43; that span reads AFSGGLDTS. Y99 serves as a coordination point for L-citrulline. 2 residues coordinate ATP: G129 and T131. T131, N135, and D136 together coordinate L-aspartate. N135 provides a ligand contact to L-citrulline. ATP is bound at residue D136. Residues R139 and S192 each contribute to the L-citrulline site. An ATP-binding site is contributed by D194. Positions 201, 203, and 280 each coordinate L-citrulline.

This sequence belongs to the argininosuccinate synthase family. Type 2 subfamily. Homotetramer.

The protein localises to the cytoplasm. It carries out the reaction L-citrulline + L-aspartate + ATP = 2-(N(omega)-L-arginino)succinate + AMP + diphosphate + H(+). Its pathway is amino-acid biosynthesis; L-arginine biosynthesis; L-arginine from L-ornithine and carbamoyl phosphate: step 2/3. The polypeptide is Argininosuccinate synthase (Afipia carboxidovorans (strain ATCC 49405 / DSM 1227 / KCTC 32145 / OM5) (Oligotropha carboxidovorans)).